Here is a 1174-residue protein sequence, read N- to C-terminus: Male determiner protein Mdmd(Y) (1174 aa).

Residues 1 to 15 (MNATDAESRKPENKP) are compositionally biased toward basic and acidic residues. Disordered regions lie at residues 1-51 (MNAT…SGQR), 79-109 (RKDGSNEMLPKEDSINTNHNYTTDSDEHPVE), and 136-259 (KQLS…LRRS). Residues 16 to 35 (SSESSSSGSTSGSSDGEVSS) are compositionally biased toward low complexity. Over residues 36–47 (KTYFKNNKSKVL) the composition is skewed to polar residues. The span at 79–92 (RKDGSNEMLPKEDS) shows a compositional bias: basic and acidic residues. A compositionally biased stretch (low complexity) spans 138–153 (LSAYRSRSRSTRLSYS). Basic residues predominate over residues 167–180 (SRYKKSVLRNRRTS). The segment covering 183-200 (HGRDSSTTKRSVSRDKDN) has biased composition (basic and acidic residues). The segment covering 201 to 223 (RLRRRIGSSRSHTRSHSRFRRSE) has biased composition (basic residues). The segment covering 235 to 259 (RSQERRHERRRSMSSDYERIALRRS) has biased composition (basic and acidic residues). The 184-residue stretch at 348 to 531 (KKYIHGYINK…KVLFQVRRDG (184 aa)) folds into the MIF4G domain. Positions 597–608 (DSDGSFGSGSNS) are enriched in low complexity. A disordered region spans residues 597 to 616 (DSDGSFGSGSNSETALSDCD). In terms of domain architecture, MI spans 641–757 (ALRRTIYLTL…SWDVLDCIKL (117 aa)). The segment covering 840–857 (SAPSSSSSSSLSSELSAP) has biased composition (low complexity). Disordered regions lie at residues 840–1045 (SAPS…SRTK) and 1089–1135 (KGGP…SREY). Composition is skewed to basic residues over residues 869–886 (KKKHKGKNKKMTKKKNPS) and 895–909 (IVGKNKIAAKNKTIK). The span at 910 to 924 (RRTDKDNSSSKDNFL) shows a compositional bias: basic and acidic residues. Over residues 926–957 (SESSSNESISLDSLSSELFAPSSYSSSESSND) the composition is skewed to low complexity. A compositionally biased stretch (basic residues) spans 963-1001 (KHKGKNKKMTKKKNPSNKREKTKKKLSKNKKAPNKNTKK). The segment covering 1010–1020 (SSESSISESKS) has biased composition (low complexity). Over residues 1034–1045 (RKKRVTSKSRTK) the composition is skewed to basic residues. The span at 1089 to 1118 (KGGPNCRKDNYGNRQNHEISQRHDSEIKRR) shows a compositional bias: basic and acidic residues. Positions 1119–1130 (REERKKRHHEKN) are enriched in basic residues.

The protein belongs to the CWC22 family. As to quaternary structure, component of the spliceosome C complex.

The protein localises to the nucleus speckle. Male determiner protein (M-factor) that controls male somatic sexual differentiation. Acts as a dominant factor that regulates the mRNA splicing of transformer (tra) and doublesex (dsx) transcripts and promotes expression of male splice forms of tra and dsx. Probably acts as a component of the spliceosome C complex required for mRNA splicing factor and exon-junction complex (EJC) assembly. Hinders eIF4AIII from non-specifically binding RNA and escorts it to the splicing machinery to promote EJC assembly on mature mRNAs. The sequence is that of Male determiner protein Mdmd(Y) from Musca domestica (House fly).